A 184-amino-acid chain; its full sequence is NADH-quinone oxidoreductase subunit B (184 aa).

C63, C64, C128, and C158 together coordinate [4Fe-4S] cluster.

Belongs to the complex I 20 kDa subunit family. As to quaternary structure, NDH-1 is composed of 14 different subunits. Subunits NuoB, C, D, E, F, and G constitute the peripheral sector of the complex. The cofactor is [4Fe-4S] cluster.

The protein resides in the cell inner membrane. The enzyme catalyses a quinone + NADH + 5 H(+)(in) = a quinol + NAD(+) + 4 H(+)(out). Its function is as follows. NDH-1 shuttles electrons from NADH, via FMN and iron-sulfur (Fe-S) centers, to quinones in the respiratory chain. Couples the redox reaction to proton translocation (for every two electrons transferred, four hydrogen ions are translocated across the cytoplasmic membrane), and thus conserves the redox energy in a proton gradient. This is NADH-quinone oxidoreductase subunit B from Stenotrophomonas maltophilia (strain R551-3).